Reading from the N-terminus, the 431-residue chain is Adenylosuccinate synthetase (431 aa).

GTP-binding positions include 12-18 (GDEGKGK) and 40-42 (GHT). Residue Asp-13 is the Proton acceptor of the active site. Mg(2+) contacts are provided by Asp-13 and Gly-40. Residues 13 to 16 (DEGK), 38 to 41 (NAGH), Thr-128, Arg-142, Gln-223, Thr-238, and Arg-301 each bind IMP. His-41 serves as the catalytic Proton donor. 297-303 (TVTGRPR) is a substrate binding site. GTP is bound by residues Arg-303, 329 to 331 (SID), and 411 to 413 (SVG).

Belongs to the adenylosuccinate synthetase family. Homodimer. Mg(2+) serves as cofactor.

The protein resides in the cytoplasm. The catalysed reaction is IMP + L-aspartate + GTP = N(6)-(1,2-dicarboxyethyl)-AMP + GDP + phosphate + 2 H(+). It functions in the pathway purine metabolism; AMP biosynthesis via de novo pathway; AMP from IMP: step 1/2. Plays an important role in the de novo pathway of purine nucleotide biosynthesis. Catalyzes the first committed step in the biosynthesis of AMP from IMP. In Lacticaseibacillus paracasei (strain ATCC 334 / BCRC 17002 / CCUG 31169 / CIP 107868 / KCTC 3260 / NRRL B-441) (Lactobacillus paracasei), this protein is Adenylosuccinate synthetase.